Reading from the N-terminus, the 382-residue chain is Galactokinase (382 aa).

34–37 (EHTD) contributes to the substrate binding site. 124 to 130 (GAGLSSS) is an ATP binding site. Mg(2+) contacts are provided by Ser-130 and Glu-162. The Proton acceptor role is filled by Asp-174. Substrate is bound at residue Tyr-223.

This sequence belongs to the GHMP kinase family. GalK subfamily.

The protein localises to the cytoplasm. The catalysed reaction is alpha-D-galactose + ATP = alpha-D-galactose 1-phosphate + ADP + H(+). It functions in the pathway carbohydrate metabolism; galactose metabolism. In terms of biological role, catalyzes the transfer of the gamma-phosphate of ATP to D-galactose to form alpha-D-galactose-1-phosphate (Gal-1-P). This Aeromonas hydrophila subsp. hydrophila (strain ATCC 7966 / DSM 30187 / BCRC 13018 / CCUG 14551 / JCM 1027 / KCTC 2358 / NCIMB 9240 / NCTC 8049) protein is Galactokinase.